A 103-amino-acid chain; its full sequence is UPF0235 protein RHECIAT_CH0004196 (103 aa).

Belongs to the UPF0235 family.

This chain is UPF0235 protein RHECIAT_CH0004196, found in Rhizobium etli (strain CIAT 652).